We begin with the raw amino-acid sequence, 185 residues long: Capsid protein (185 aa).

Residues 136-185 (NAPILSTLPETTVVRRRDRGRSPRRRTPSPRRRRSPSPRRRRSQSRESQC) form a disordered region. The segment covering 149–178 (VRRRDRGRSPRRRTPSPRRRRSPSPRRRRS) has biased composition (basic residues). Phosphoserine; by host occurs at positions 157, 164, and 172. A 1; half-length repeat occupies 157 to 163 (SPRRRTP). A 3 X 8 AA repeats of S-P-R-R-R-[PR]-S-Q region spans residues 157–179 (SPRRRTPSPRRRRSPSPRRRRSQ). The Bipartite nuclear localization signal signature appears at 160 to 177 (RRTPSPRRRRSPSPRRRR). 2 repeat units span residues 164–171 (SPRRRRSP) and 172–179 (SPRRRRSQ). Residues 179 to 185 (QSRESQC) are RNA binding.

It belongs to the orthohepadnavirus core antigen family. As to quaternary structure, homodimerizes, then multimerizes. Interacts with cytosol exposed regions of viral L glycoprotein present in the reticulum-to-Golgi compartment. Interacts with human FLNB. Phosphorylated form interacts with host importin alpha; this interaction depends on the exposure of the NLS, which itself depends upon genome maturation and/or phosphorylation of the capsid protein. Interacts with host NUP153. In terms of processing, phosphorylated by host SRPK1, SRPK2, and maybe protein kinase C or GAPDH. Phosphorylation is critical for pregenomic RNA packaging. Protein kinase C phosphorylation is stimulated by HBx protein and may play a role in transport of the viral genome to the nucleus at the late step during the viral replication cycle.

Its subcellular location is the virion. The protein resides in the host cytoplasm. Functionally, self assembles to form an icosahedral capsid. Most capsids appear to be large particles with an icosahedral symmetry of T=4 and consist of 240 copies of capsid protein, though a fraction forms smaller T=3 particles consisting of 180 capsid proteins. Entering capsids are transported along microtubules to the nucleus. Phosphorylation of the capsid is thought to induce exposure of nuclear localization signal in the C-terminal portion of the capsid protein that allows binding to the nuclear pore complex via the importin (karyopherin-) alpha and beta. Capsids are imported in intact form through the nuclear pore into the nuclear basket, where it probably binds NUP153. Only capsids that contain the mature viral genome can release the viral DNA and capsid protein into the nucleoplasm. Immature capsids get stuck in the basket. Capsids encapsulate the pre-genomic RNA and the P protein. Pre-genomic RNA is reverse-transcribed into DNA while the capsid is still in the cytoplasm. The capsid can then either be directed to the nucleus, providing more genomes for transcription, or bud through the endoplasmic reticulum to provide new virions. The chain is Capsid protein from Hepatitis B virus genotype A2 subtype adw2 (strain Rutter 1979) (HBV-A).